Here is a 199-residue protein sequence, read N- to C-terminus: BREX protein BrxA (199 aa).

Belongs to the BrxA family.

Functionally, BREX systems (bacteriophage exclusion) provide immunity against bacteriophage. Part of a type 1 BREX system which protects against dsDNA phage. This system allows phage adsorption but prevents phage DNA replication, without degradation of the phage DNA. Methylation of bacterial DNA by PglX guides self/non-self discrimination. The chain is BREX protein BrxA from Paramagnetospirillum magneticum (strain ATCC 700264 / AMB-1) (Magnetospirillum magneticum).